Reading from the N-terminus, the 415-residue chain is Beta-2 adrenergic receptor (415 aa).

Over 1-34 (MGQPANRSVFLLAPNGSHAPDQGDSQERSEAWVV) the chain is Extracellular. N-linked (GlcNAc...) asparagine glycans are attached at residues asparagine 6 and asparagine 15. Residues 35 to 58 (GMGIVMSLIVLAIVFGNVLVITAI) traverse the membrane as a helical segment. The Cytoplasmic segment spans residues 59–71 (ARFERLQTVTNYF). A helical membrane pass occupies residues 72 to 95 (ITSLACADLVMGLAVVPFGASHIL). Over 96–106 (MKMWTFGNFWC) the chain is Extracellular. Disulfide bonds link cysteine 106/cysteine 191 and cysteine 184/cysteine 190. A helical transmembrane segment spans residues 107 to 129 (EFWTSIDVLCVTASIETLCVIAV). Residues 130-150 (DRYFAITSPFKYQSLLTKNKA) lie on the Cytoplasmic side of the membrane. Tyrosine 141 carries the phosphotyrosine modification. The chain crosses the membrane as a helical span at residues 151-174 (RVVILMVWIVSGLTSFLPIQMHWY). The Extracellular portion of the chain corresponds to 175–196 (RATHQEAINCYAKETCCDFFTN). Residues 197–220 (QAYAIASSIVSFYLPLVVMVFVYS) traverse the membrane as a helical segment. Topologically, residues 221 to 274 (RVFQVAQRQLQKIDRSEGRFHAQNLSQVEQDGRSGHGHRRSSKFCLKEHKALKT) are cytoplasmic. Position 246 is a phosphoserine (serine 246). Phosphoserine; by PKA is present on residues serine 261 and serine 262. Residue cysteine 265 is the site of S-palmitoyl cysteine attachment. A helical membrane pass occupies residues 275–298 (LGIIMGTFTLCWLPFFIVNIVHVI). Over 299–305 (QDNLIPK) the chain is Extracellular. Residues 306–329 (EVYILLNWVGYVNSAFNPLIYCRS) form a helical membrane-spanning segment. Residues 330-415 (PDFRIAFQEL…RNCSTNDSLL (86 aa)) lie on the Cytoplasmic side of the membrane. Cysteine 341 carries the S-palmitoyl cysteine lipid modification. Serine 345 and serine 346 each carry phosphoserine; by PKA. Serine 355 carries the post-translational modification Phosphoserine; by BARK. Residues 379–415 (SELLCEDPPGTEDRQGTVPSDSVDSQGRNCSTNDSLL) are disordered. 4-hydroxyproline occurs at positions 387 and 397. Residues 395 to 415 (TVPSDSVDSQGRNCSTNDSLL) show a composition bias toward polar residues. Residues 412–415 (DSLL) carry the PDZ-binding motif.

It belongs to the G-protein coupled receptor 1 family. Adrenergic receptor subfamily. ADRB2 sub-subfamily. As to quaternary structure, binds NHERF1 and GPRASP1. Interacts with ARRB1 and ARRB2. Interacts with SRC. Interacts with USP20 and USP33. Interacts with VHL; the interaction, which is increased on hydroxylation of ADRB2, ubiquitinates ADRB2 leading to its degradation. Interacts with EGLN3; the interaction hydroxylates ADRB2 facilitating VHL-E3 ligase-mediated ubiquitination. Interacts (via PDZ-binding motif) with SNX27 (via PDZ domain); the interaction is required when endocytosed to prevent degradation in lysosomes and promote recycling to the plasma membrane. Interacts with CNIH4. Interacts with ARRDC3. Interacts with NEDD4. Interacts with MARCHF2. Palmitoylated; may reduce accessibility of Ser-345 and Ser-346 by anchoring Cys-341 to the plasma membrane. Agonist stimulation promotes depalmitoylation and further allows Ser-345 and Ser-346 phosphorylation. In terms of processing, phosphorylated by PKA and BARK upon agonist stimulation, which mediates homologous desensitization of the receptor. PKA-mediated phosphorylation seems to facilitate phosphorylation by BARK. Post-translationally, phosphorylation of Tyr-141 is induced by insulin and leads to supersensitization of the receptor. Polyubiquitinated. Agonist-induced ubiquitination leads to sort internalized receptors to the lysosomes for degradation. Deubiquitination by USP20 and USP33, leads to ADRB2 recycling and resensitization after prolonged agonist stimulation. USP20 and USP33 are constitutively associated and are dissociated immediately after agonist stimulation. Ubiquitination by the VHL-E3 ligase complex is oxygen-dependent. In terms of processing, hydroxylation by EGLN3 occurs only under normoxia and increases the interaction with VHL and the subsequent ubiquitination and degradation of ADRB2. Post-translationally, palmitoylated. Mainly palmitoylated at Cys-341. Palmitoylation may reduce accessibility of phosphorylation sites by anchoring the receptor to the plasma membrane. Agonist stimulation promotes depalmitoylation and further allows Ser-345 and Ser-346 phosphorylation. Also undergoes transient, ligand-induced palmitoylation at Cys-265 probably by ZDHHC9, ZDHHC14 and ZDHHC18 within the Golgi. Palmitoylation at Cys-265 requires phosphorylation by PKA and receptor internalization and stabilizes the receptor. Could be depalmitoylated by LYPLA1 at the plasma membrane.

The protein localises to the cell membrane. The protein resides in the early endosome. Its subcellular location is the golgi apparatus. Beta-adrenergic receptors mediate the catecholamine-induced activation of adenylate cyclase through the action of G proteins. The beta-2-adrenergic receptor binds epinephrine with an approximately 30-fold greater affinity than it does norepinephrine. This chain is Beta-2 adrenergic receptor (ADRB2), found in Canis lupus familiaris (Dog).